A 405-amino-acid polypeptide reads, in one-letter code: Elongation factor Tu (405 aa).

The 204-residue stretch at 10-213 (KEHVNVGTIG…AMDEYIPTPQ (204 aa)) folds into the tr-type G domain. The interval 19–26 (GHVDHGKS) is G1. Position 19–26 (19–26 (GHVDHGKS)) interacts with GTP. Residue S26 participates in Mg(2+) binding. The segment at 64-68 (GITIN) is G2. The G3 stretch occupies residues 85 to 88 (DCPG). GTP is bound by residues 85–89 (DCPGH) and 140–143 (NKCD). Residues 140–143 (NKCD) are G4. The G5 stretch occupies residues 178 to 180 (SAL).

It belongs to the TRAFAC class translation factor GTPase superfamily. Classic translation factor GTPase family. EF-Tu/EF-1A subfamily. In terms of assembly, monomer.

It is found in the cytoplasm. The catalysed reaction is GTP + H2O = GDP + phosphate + H(+). In terms of biological role, GTP hydrolase that promotes the GTP-dependent binding of aminoacyl-tRNA to the A-site of ribosomes during protein biosynthesis. This is Elongation factor Tu from Aquifex aeolicus (strain VF5).